Reading from the N-terminus, the 275-residue chain is Diaminopimelate epimerase (275 aa).

Residues asparagine 12, glutamine 45, and asparagine 65 each contribute to the substrate site. Catalysis depends on cysteine 74, which acts as the Proton donor. Substrate-binding positions include 75–76, asparagine 158, asparagine 191, and 209–210; these read GN and ER. The Proton acceptor role is filled by cysteine 218. 219 to 220 is a substrate binding site; that stretch reads GT.

It belongs to the diaminopimelate epimerase family. As to quaternary structure, homodimer.

It localises to the cytoplasm. It carries out the reaction (2S,6S)-2,6-diaminopimelate = meso-2,6-diaminopimelate. It functions in the pathway amino-acid biosynthesis; L-lysine biosynthesis via DAP pathway; DL-2,6-diaminopimelate from LL-2,6-diaminopimelate: step 1/1. In terms of biological role, catalyzes the stereoinversion of LL-2,6-diaminopimelate (L,L-DAP) to meso-diaminopimelate (meso-DAP), a precursor of L-lysine and an essential component of the bacterial peptidoglycan. The polypeptide is Diaminopimelate epimerase (Shewanella frigidimarina (strain NCIMB 400)).